The chain runs to 119 residues: Holo-[acyl-carrier-protein] synthase (119 aa).

Residues Asp-2 and Glu-51 each contribute to the Mg(2+) site.

It belongs to the P-Pant transferase superfamily. AcpS family. The cofactor is Mg(2+).

The protein localises to the cytoplasm. The catalysed reaction is apo-[ACP] + CoA = holo-[ACP] + adenosine 3',5'-bisphosphate + H(+). Its function is as follows. Transfers the 4'-phosphopantetheine moiety from coenzyme A to a Ser of acyl-carrier-protein. This is Holo-[acyl-carrier-protein] synthase from Chlorobium luteolum (strain DSM 273 / BCRC 81028 / 2530) (Pelodictyon luteolum).